A 321-amino-acid polypeptide reads, in one-letter code: MVNLTSMSGFLLMGFSDERKLQILHALVFLVTYLLALTGNLLIITIITVDRRLHSPMYYFLKHLSLLDLCFISVTVPQSIANSLMGNGYISLVQCILQVFFFIALASSEVAILTVMSYDRYAAICQPLHYETIMDPRACRHAVIAVWIAGGLSGLMHAAINFSIPLCGKRVIHQFFCDVPQMLKLACSYEFINEIALAAFTTSAAFICLISIVLSYIRIFSTVLRIPSAEGRTKVFSTCLPHLFVATFFLSAAGFEFLRLPSDSSSTVDLVFSVFYTVIPPTLNPVIYSLRNDSMKAALRKMLSKEELPQRKMCLKAMFKL.

The Extracellular portion of the chain corresponds to 1 to 23 (MVNLTSMSGFLLMGFSDERKLQI). The N-linked (GlcNAc...) asparagine glycan is linked to Asn3. The chain crosses the membrane as a helical span at residues 24 to 44 (LHALVFLVTYLLALTGNLLII). The Cytoplasmic segment spans residues 45–52 (TIITVDRR). Residues 53-73 (LHSPMYYFLKHLSLLDLCFIS) traverse the membrane as a helical segment. The Extracellular portion of the chain corresponds to 74–97 (VTVPQSIANSLMGNGYISLVQCIL). Residues Cys95 and Cys187 are joined by a disulfide bond. A helical membrane pass occupies residues 98 to 118 (QVFFFIALASSEVAILTVMSY). The Cytoplasmic segment spans residues 119–137 (DRYAAICQPLHYETIMDPR). A helical transmembrane segment spans residues 138–158 (ACRHAVIAVWIAGGLSGLMHA). At 159–194 (AINFSIPLCGKRVIHQFFCDVPQMLKLACSYEFINE) the chain is on the extracellular side. Residues 195 to 215 (IALAAFTTSAAFICLISIVLS) form a helical membrane-spanning segment. At 216–235 (YIRIFSTVLRIPSAEGRTKV) the chain is on the cytoplasmic side. A helical membrane pass occupies residues 236–256 (FSTCLPHLFVATFFLSAAGFE). The Extracellular segment spans residues 257-269 (FLRLPSDSSSTVD). The helical transmembrane segment at 270–290 (LVFSVFYTVIPPTLNPVIYSL) threads the bilayer. Over 291-321 (RNDSMKAALRKMLSKEELPQRKMCLKAMFKL) the chain is Cytoplasmic.

It belongs to the G-protein coupled receptor 1 family.

It is found in the cell membrane. Odorant receptor. This Homo sapiens (Human) protein is Olfactory receptor 14J1 (OR14J1).